A 215-amino-acid polypeptide reads, in one-letter code: Peptide methionine sulfoxide reductase MsrA (215 aa).

Residue cysteine 58 is part of the active site.

It belongs to the MsrA Met sulfoxide reductase family.

It carries out the reaction L-methionyl-[protein] + [thioredoxin]-disulfide + H2O = L-methionyl-(S)-S-oxide-[protein] + [thioredoxin]-dithiol. The enzyme catalyses [thioredoxin]-disulfide + L-methionine + H2O = L-methionine (S)-S-oxide + [thioredoxin]-dithiol. In terms of biological role, has an important function as a repair enzyme for proteins that have been inactivated by oxidation. Catalyzes the reversible oxidation-reduction of methionine sulfoxide in proteins to methionine. This Pseudomonas aeruginosa (strain LESB58) protein is Peptide methionine sulfoxide reductase MsrA.